The primary structure comprises 216 residues: MWPPCGTLRTLALARSRGARACSGDGGVSYTQGQSPEPRTREYFYYVDHQGQLFLDDSKMKNFITCFKDPQFLVTFFSRLRPNRSGRYEAAFPFLSPCGRERNFLRCEDRPVVFTHLLTADHGPPRLSYCGGGEALAVPFEPARLLPLAANGRLYHPAPERAGGVGLVRSALAFELSACFEYGPGAPALPSHVRWQGRRLALTMDLAPLLLAARSP.

Belongs to the UPF0598 family.

In Homo sapiens (Human), this protein is UPF0598 protein C8orf82 (C8orf82).